The chain runs to 41 residues: Photosystem I reaction center subunit IX (41 aa).

A helical membrane pass occupies residues 7 to 27; it reads YLSTAPVLATVWMIITAGILI.

Belongs to the PsaJ family.

The protein localises to the cellular thylakoid membrane. Functionally, may help in the organization of the PsaE and PsaF subunits. In Trichodesmium erythraeum (strain IMS101), this protein is Photosystem I reaction center subunit IX.